Here is a 401-residue protein sequence, read N- to C-terminus: Probable inactive purple acid phosphatase 14 (401 aa).

The first 30 residues, methionine 1–alanine 30, serve as a signal peptide directing secretion. N-linked (GlcNAc...) asparagine glycosylation is present at asparagine 79. Asparagine 197 serves as a coordination point for substrate. Position 197 (asparagine 197) interacts with Zn(2+). Asparagine 246 carries N-linked (GlcNAc...) asparagine glycosylation. Histidine 256 serves as a coordination point for Zn(2+). Asparagine 266 is a glycosylation site (N-linked (GlcNAc...) asparagine). Histidine 305 is a binding site for Zn(2+). A substrate-binding site is contributed by histidine 305–histidine 307. Histidine 307 provides a ligand contact to Fe cation. N-linked (GlcNAc...) asparagine glycans are attached at residues asparagine 371 and asparagine 384.

It belongs to the metallophosphoesterase superfamily. Purple acid phosphatase family. Homodimer. Requires Fe cation as cofactor. The cofactor is Zn(2+). As to expression, specifically expressed in flowers.

Its subcellular location is the secreted. The sequence is that of Probable inactive purple acid phosphatase 14 (PAP14) from Arabidopsis thaliana (Mouse-ear cress).